The sequence spans 98 residues: NADH-ubiquinone oxidoreductase chain 4L (98 aa).

3 consecutive transmembrane segments (helical) span residues 2–22, 29–49, and 61–81; these read PSISININLAFATALLGMLMF, SLLCLEGMMLSMFILSTLTIL, and ILLLVFAACEAAIGLALLVMV.

It belongs to the complex I subunit 4L family. Core subunit of respiratory chain NADH dehydrogenase (Complex I) which is composed of 45 different subunits.

Its subcellular location is the mitochondrion inner membrane. The catalysed reaction is a ubiquinone + NADH + 5 H(+)(in) = a ubiquinol + NAD(+) + 4 H(+)(out). Functionally, core subunit of the mitochondrial membrane respiratory chain NADH dehydrogenase (Complex I) which catalyzes electron transfer from NADH through the respiratory chain, using ubiquinone as an electron acceptor. Part of the enzyme membrane arm which is embedded in the lipid bilayer and involved in proton translocation. The protein is NADH-ubiquinone oxidoreductase chain 4L (MT-ND4L) of Microcebus simmonsi (Simmons's mouse lemur).